The primary structure comprises 517 residues: B3 domain-containing protein REM1 (517 aa).

The TF-B3 1 DNA-binding region spans 7–92; that stretch reads FSLFQQKFRT…VFHVAVVSPS (86 aa). Residues 115–140 are compositionally biased toward acidic residues; sequence DDVDDDDYGQDDEDDDDDDDEGEDNI. The tract at residues 115–158 is disordered; that stretch reads DDVDDDDYGQDDEDDDDDDDEGEDNIENISEKTDKRQEADSSSD. The segment covering 143 to 157 has biased composition (basic and acidic residues); the sequence is ISEKTDKRQEADSSS. 2 DNA-binding regions (TF-B3) span residues 162 to 259 and 285 to 385; these read FITA…CPQE and FLIV…FCSK. The disordered stretch occupies residues 393–415; it reads GKGNQRTRKKRACETAPQPRNVK.

As to expression, expressed in the shoot apical meristem (SAM), in the inflorescence apex and flowers.

The protein localises to the nucleus. In terms of biological role, may play a role in flower development. The sequence is that of B3 domain-containing protein REM1 (REM1) from Arabidopsis thaliana (Mouse-ear cress).